The primary structure comprises 271 residues: MALDIAMKFYLRSPLRRDRVECRITQSNEPLRPCIQTTDKTLLSELSNQENKVKKRVSFADSRGLALTMVKVYSDFDDELEIPFNISELIDNIVNLTTVEKEHFVLDFVQPSADYLDFRNRLKADSVCLENCMLKDKALVGTVKVKNLAFQKCVKIRITFDSWQTYTDYDCQYVKDSYGGSDKDTFSFDVSLPDSIQSNARLEFAVCFDCEGRIFWDSNKGLNYRIVRHGHRIPYDPVCVSVDQYGSPRCSYGIFPELPTYSGFDKLGPYY.

Positions 56-59 (RVSF) match the PP1-binding motif motif. One can recognise a CBM21 domain in the interval 119–227 (RNRLKADSVC…SNKGLNYRIV (109 aa)).

As to quaternary structure, interacts with glycogen, PPP1CC catalytic subunit of PP1 and PYGL. Associates with glycogen particles. Forms complexes with debranching enzyme, glycogen phosphorylase, glycogen synthase and phosphorylase kinase which is necessary for its regulation of PP1 activity.

Its function is as follows. Acts as a glycogen-targeting subunit for phosphatase PP1. Facilitates interaction of the PP1 with enzymes of the glycogen metabolism and regulates its activity. Suppresses the rate at which PP1 dephosphorylates (inactivates) glycogen phosphorylase and enhances the rate at which it activates glycogen synthase and therefore limits glycogen breakdown. This chain is Protein phosphatase 1 regulatory subunit 3B-B (ppp1r3b-b), found in Xenopus laevis (African clawed frog).